The sequence spans 705 residues: Phosphatidylinositol 4-phosphate 5-kinase 3 (705 aa).

7 MORN repeats span residues 58–80 (YNGG…DGCM), 81–103 (YEGE…SGAT), 104–126 (YEGQ…DGDT), 127–149 (YRGH…NGDG), 150–172 (YQGN…DGNE), 173–195 (YVGE…NGNR), and 196–218 (YDGL…EEKT). The 381-residue stretch at 321 to 701 (TVTAGHKNYD…RFRDFINKIF (381 aa)) folds into the PIPK domain. Positions 661–682 (YDITKKLEHAYKSLHADPASIS) are activation loop.

The protein resides in the cell membrane. The enzyme catalyses a 1,2-diacyl-sn-glycero-3-phospho-(1D-myo-inositol 4-phosphate) + ATP = a 1,2-diacyl-sn-glycero-3-phospho-(1D-myo-inositol-4,5-bisphosphate) + ADP + H(+). With DRP1A and DRP2B, required for the precise coordination of polar ARAC3/ROP6 and ARAC4/ROP2 placement and subsequent root hair positioning during planar polarity formation in root hair-forming cells, probably by mediating the correct basal-to-planar polarity switching of D6PK into the polar, lipid-enriched domain. In Arabidopsis thaliana (Mouse-ear cress), this protein is Phosphatidylinositol 4-phosphate 5-kinase 3.